We begin with the raw amino-acid sequence, 330 residues long: Homeobox protein Hox-C13 (330 aa).

A compositionally biased stretch (gly residues) spans 30–47 (GGGGGGGGGTGGAGGGCS). Residues 30 to 50 (GGGGGGGGGTGGAGGGCSGAS) are disordered. The segment at residues 260-319 (GRKKRVPYTKVQLKELEKEYAASKFITKEKRRRISATTNLSERQVTIWFQNRRVKEKKVV) is a DNA-binding region (homeobox).

It belongs to the Abd-B homeobox family.

It is found in the nucleus. Its function is as follows. Transcription factor which plays a role in hair follicle differentiation. Regulates FOXQ1 expression and that of other hair-specific genes. This Homo sapiens (Human) protein is Homeobox protein Hox-C13 (HOXC13).